The following is a 492-amino-acid chain: Beta-glucosidase 38 (492 aa).

The first 21 residues, 1 to 21 (MNMPLLLLIAIVVVSLSHGNG), serve as a signal peptide directing secretion. A beta-D-glucoside is bound at residue Q45. N-linked (GlcNAc...) asparagine glycosylation is found at N73 and N77. A beta-D-glucoside-binding positions include H146 and 191–192 (NE). The active-site Proton donor is E192. A disulfide bridge connects residues C211 and C214. N310 carries N-linked (GlcNAc...) asparagine glycosylation. An a beta-D-glucoside-binding site is contributed by Y331. N341 carries an N-linked (GlcNAc...) asparagine glycan. E400 contacts a beta-D-glucoside. Residue E400 is the Nucleophile of the active site. N408 carries N-linked (GlcNAc...) asparagine glycosylation. Residues W447, 454 to 455 (EW), and F463 contribute to the a beta-D-glucoside site.

Belongs to the glycosyl hydrolase 1 family.

It catalyses the reaction Hydrolysis of terminal, non-reducing beta-D-glucosyl residues with release of beta-D-glucose.. This is Beta-glucosidase 38 (BGLU38) from Oryza sativa subsp. japonica (Rice).